Consider the following 253-residue polypeptide: Tryptophan synthase alpha chain (253 aa).

Catalysis depends on proton acceptor residues Glu46 and Asp57.

This sequence belongs to the TrpA family. Tetramer of two alpha and two beta chains.

It carries out the reaction (1S,2R)-1-C-(indol-3-yl)glycerol 3-phosphate + L-serine = D-glyceraldehyde 3-phosphate + L-tryptophan + H2O. Its pathway is amino-acid biosynthesis; L-tryptophan biosynthesis; L-tryptophan from chorismate: step 5/5. Functionally, the alpha subunit is responsible for the aldol cleavage of indoleglycerol phosphate to indole and glyceraldehyde 3-phosphate. The sequence is that of Tryptophan synthase alpha chain from Dictyoglomus turgidum (strain DSM 6724 / Z-1310).